The sequence spans 103 residues: MLNDLYEEIKLRKEQPKEGSYTNYLFDKGLDKILKKVGEEATEVVIAAKNDKQELIAEVSDLTYHLLVLLAEKNIPLAAIQTELKNREGKLSTTRDRKEINDL.

This sequence belongs to the PRA-PH family.

It localises to the cytoplasm. The enzyme catalyses 1-(5-phospho-beta-D-ribosyl)-ATP + H2O = 1-(5-phospho-beta-D-ribosyl)-5'-AMP + diphosphate + H(+). It functions in the pathway amino-acid biosynthesis; L-histidine biosynthesis; L-histidine from 5-phospho-alpha-D-ribose 1-diphosphate: step 2/9. This Listeria monocytogenes serotype 4a (strain HCC23) protein is Phosphoribosyl-ATP pyrophosphatase.